The chain runs to 310 residues: Transcription initiation factor IIB (310 aa).

The TFIIB-type zinc-finger motif lies at 9–41 (EKETKCPECGSDDLRGDYERAEIVCGKCGLVID). Positions 14, 17, 33, and 36 each coordinate Zn(2+). 2 consecutive repeat copies span residues 127–210 (SELD…TREL) and 221–302 (DYVP…ELTE).

The protein belongs to the TFIIB family.

Stabilizes TBP binding to an archaeal box-A promoter. Also responsible for recruiting RNA polymerase II to the pre-initiation complex (DNA-TBP-TFIIB). The sequence is that of Transcription initiation factor IIB from Methanothermobacter thermautotrophicus (strain ATCC 29096 / DSM 1053 / JCM 10044 / NBRC 100330 / Delta H) (Methanobacterium thermoautotrophicum).